Consider the following 458-residue polypeptide: F-box/WD repeat-containing protein 9 (458 aa).

Methionine 1 bears the N-acetylmethionine mark. The segment at 1–28 (MELPPGPRDDPHAWDDDSDPELEPDTDA) is disordered. A compositionally biased stretch (acidic residues) spans 16–28 (DDSDPELEPDTDA). Residues serine 18 and serine 59 each carry the phosphoserine modification. The F-box domain maps to 76–123 (VPGLLSLPPELLLEICAYLDARLVLHVLPRVCHALRDLVRDRVTWRLR). 7 WD repeats span residues 171-210 (GHFA…VEPS), 224-261 (THKG…QQFG), 264-301 (KGKA…ALLK), 305-342 (LHSS…VLQR), 344-381 (QLDS…FQLV), 387-424 (GHRS…RTIC), and 427-458 (SHHN…RLQA).

In terms of assembly, interacts with SKP1 and CUL1.

In terms of biological role, substrate-recognition component of the SCF (SKP1-CUL1-F-box protein)-type E3 ubiquitin ligase complex. This is F-box/WD repeat-containing protein 9 (FBXW9) from Bos taurus (Bovine).